The chain runs to 201 residues: Protease (201 aa).

Catalysis depends on residues histidine 53, aspartate 70, and cysteine 121.

The protein belongs to the peptidase C5 family. In terms of assembly, interacts with protease cofactor pVI-C; this interaction is necessary for protease activation.

Its subcellular location is the virion. It is found in the host nucleus. It carries out the reaction Cleaves proteins of the adenovirus and its host cell at two consensus sites: -Yaa-Xaa-Gly-Gly-|-Xaa- and -Yaa-Xaa-Gly-Xaa-|-Gly- (in which Yaa is Met, Ile or Leu, and Xaa is any amino acid).. Requires DNA and protease cofactor for maximal activation. Inside nascent virions, becomes partially activated by binding to the viral DNA, allowing it to cleave the cofactor that binds to the protease and fully activates it. Actin, like the viral protease cofactor, seems to act as a cofactor in the cleavage of cytokeratin 18 and of actin itself. Its function is as follows. Cleaves viral precursor proteins (pTP, pIIIa, pVI, pVII, pVIII, and pX) inside newly assembled particles giving rise to mature virions. Protease complexed to its cofactor slides along the viral DNA to specifically locate and cleave the viral precursors. Mature virions have a weakened organization compared to the unmature virions, thereby facilitating subsequent uncoating. Without maturation, the particle lacks infectivity and is unable to uncoat. Late in adenovirus infection, in the cytoplasm, may participate in the cytoskeleton destruction. Cleaves host cell cytoskeletal keratins K7 and K18. In Equine adenovirus B serotype 2 (EAdV-2), this protein is Protease.